Reading from the N-terminus, the 303-residue chain is Di/tripeptide transport system permease protein DppC (303 aa).

7 helical membrane passes run 33–53 (ALGGLLFMLLIVFCALFAPWV), 103–123 (LLIGLSSVVISLIPGILLGLL), 131–151 (AGPLIMRLMDIMLALPSLLLA), 152–172 (VAIVAILGPGLINTVIAIAIV), 202–222 (AGTLRLMFVCVLPNCMAPLIV), 225–245 (TLSFSSAILDAAALGFLGLGV), and 267–287 (WWVVSLPGLTILLSVLAINLM). The ABC transmembrane type-1 domain maps to 99 to 288 (ARLSLLIGLS…LSVLAINLMG (190 aa)).

Belongs to the binding-protein-dependent transport system permease family. OppBC subfamily. In terms of assembly, the complex is composed of two ATP-binding proteins (DppD and DppF), two transmembrane proteins (DppB and DppC) and a solute-binding protein (DppA1-A5). Five orthologous SBPs (DppA1-A5) are present in P.aeruginosa, which increases the substrate specificity of the DppBCDF transporter.

The protein localises to the cell inner membrane. Part of the ABC transporter DppABCDF involved in the uptake of various di/tripeptides. Is also involved in the uptake of phaseolotoxin, a toxic tripeptide inhibiting the enzyme ornithine carbamoyltransferase. Responsible for the translocation of the substrate across the membrane. The sequence is that of Di/tripeptide transport system permease protein DppC from Pseudomonas aeruginosa (strain UCBPP-PA14).